The sequence spans 274 residues: Leucine-rich repeat-containing protein 10 (274 aa).

8 LRR repeats span residues 30 to 51 (LDRMVDLSGSQLRRFPLHVCSF), 52 to 74 (TELVKLYLSDNHLHSLPPDLAQL), 76 to 97 (NLQILALDFNNFKALPRVVCTL), 98 to 120 (KQLCILYLGNNKLCDLPDELSLL), 121 to 143 (QNLRTLWLESNCLTRLPDVVCEL), 145 to 166 (LLKTLHAGSNALRLLPGQLRRL), 167 to 189 (RELRTIWLSGNQLADFPSVLLRM), and 191 to 213 (FLEVIDVDRNSIRYFPSLAHLTN). The interval 236-274 (RVGRWAEETPEPDPRKARRYALAKEENQEPPPPLLPSSS) is disordered. A compositionally biased stretch (basic and acidic residues) spans 239-250 (RWAEETPEPDPR). Positions 264-274 (EPPPPLLPSSS) are enriched in pro residues.

In terms of tissue distribution, detected specifically in the heart.

It localises to the nucleus. In terms of biological role, may play important roles in cardiac development and/or cardiac function. The protein is Leucine-rich repeat-containing protein 10 (Lrrc10) of Mus musculus (Mouse).